The primary structure comprises 60 residues: Mannitol-specific phosphotransferase enzyme IIA component (60 aa).

In terms of domain architecture, PTS EIIA type-2 spans 2–60 (SELFSNDNIFLNVNVNSQNEAIEKAGKALVDSGAVTDAYIQVVSTFMGNGLAIPHGTDD). Catalysis depends on histidine 56, which acts as the Tele-phosphohistidine intermediate. At histidine 56 the chain carries Phosphohistidine; by HPr.

In terms of assembly, homodimer or homotrimer. Seems to be a monomer when not phosphorylated.

The protein localises to the cytoplasm. In terms of biological role, the phosphoenolpyruvate-dependent sugar phosphotransferase system (sugar PTS), a major carbohydrate active transport system, catalyzes the phosphorylation of incoming sugar substrates concomitantly with their translocation across the cell membrane. The enzyme II CmtAB PTS system is involved in D-mannitol transport. This chain is Mannitol-specific phosphotransferase enzyme IIA component, found in Staphylococcus aureus.